A 329-amino-acid polypeptide reads, in one-letter code: Biotin synthase (329 aa).

The 225-residue stretch at Asn38–Ser262 folds into the Radical SAM core domain. The [4Fe-4S] cluster site is built by Cys53, Cys57, and Cys60. The [2Fe-2S] cluster site is built by Cys97, Cys128, Cys188, and Arg260.

The protein belongs to the radical SAM superfamily. Biotin synthase family. As to quaternary structure, homodimer. Requires [4Fe-4S] cluster as cofactor. The cofactor is [2Fe-2S] cluster.

It carries out the reaction (4R,5S)-dethiobiotin + (sulfur carrier)-SH + 2 reduced [2Fe-2S]-[ferredoxin] + 2 S-adenosyl-L-methionine = (sulfur carrier)-H + biotin + 2 5'-deoxyadenosine + 2 L-methionine + 2 oxidized [2Fe-2S]-[ferredoxin]. It participates in cofactor biosynthesis; biotin biosynthesis; biotin from 7,8-diaminononanoate: step 2/2. Functionally, catalyzes the conversion of dethiobiotin (DTB) to biotin by the insertion of a sulfur atom into dethiobiotin via a radical-based mechanism. This Acinetobacter baumannii (strain SDF) protein is Biotin synthase.